The sequence spans 526 residues: MGDMASSTDPAAHNSFSDFNREEMTRLADNVRSLQRTNQDLSARNTKLAEMLKSSRDKLSMMYQQLEDMAQPPSLYGTFLEMSKDGTNAEIFAGGRRMRVAMSPMLCAGDLMPGVQVRLGEGNQILEACDFEQTGDLATLMEMIGRDRALISDRSGEERVVKLAGPLMDRTRKLPRPGDTLLVDRRAGYAFENIPKTEISKLALEEAPDVSYVDIGGLDDQIELIQDAVELPFLHPEMYRSYKLHPPKGVLLYGPPGCGKTLIAKAVANSLSQRIGDAGTSYFINVKGPELLNKYVGETERQIRVIFERARELAGDGRPVIIFFDEMESIFRTRGSGISSDMETTVVPQLLAELDGVEDLSNVIVIGATNREELIDPAILRPGRLDIKIRVQRPNRSGARDIFARYITDAIPLAAPVDELIDTAVDHLFTPRPYVRLTLIDGTVETLNYHDFVSGAMIANIVDRAKKSAIKDHIDGRTTGLSAEHLIHAIDQENQQSEDLPNTSNPDEWTRIIGRQGKRVAEVEVV.

The span at 1-18 (MGDMASSTDPAAHNSFSD) shows a compositional bias: polar residues. Residues 1 to 20 (MGDMASSTDPAAHNSFSDFN) form a disordered region. The stretch at 20-59 (NREEMTRLADNVRSLQRTNQDLSARNTKLAEMLKSSRDKL) forms a coiled coil. Residue 257–262 (GCGKTL) coordinates ATP.

This sequence belongs to the AAA ATPase family. As to quaternary structure, homohexamer. Assembles into a hexameric ring structure.

This Corynebacterium efficiens (strain DSM 44549 / YS-314 / AJ 12310 / JCM 11189 / NBRC 100395) protein is AAA ATPase forming ring-shaped complexes.